Here is a 588-residue protein sequence, read N- to C-terminus: Pleckstrin homology domain-containing family A member 4 (588 aa).

The 100-residue stretch at 54–153 folds into the PH domain; the sequence is PVHIRGWLHK…WLRALGRASR (100 aa). Disordered regions lie at residues 155–349 and 495–588; these read EGED…QASM and AGLG…VDHL. Ser-164 carries the phosphoserine modification. Residues 183 to 193 are compositionally biased toward basic and acidic residues; it reads VNRREEGRISE. Residues 211–222 are compositionally biased toward polar residues; that stretch reads TPNSTVDLQTDT. 2 stretches are compositionally biased toward low complexity: residues 246–260 and 321–334; these read PRPRSAPARRPPLSA and QRTQSTQATSGSST. Ser-562 is subject to Phosphoserine.

The protein localises to the cytoplasm. It localises to the membrane. In terms of biological role, binds specifically to phosphatidylinositol 3-phosphate (PtdIns3P), but not to other phosphoinositides. This chain is Pleckstrin homology domain-containing family A member 4 (Plekha4), found in Mus musculus (Mouse).